We begin with the raw amino-acid sequence, 457 residues long: MSWSILELLRKNPEDLKNNLKRRAIDVSLVDKAVELDKKWRQVLQEVEKLRHQHNVLSSQISKLSGEERKKKIEESKNLLKILEEKEKELEEIENERDRLLSSLPNLVADDVPNGPDDSYNVPIKFWGKFKVYEGDVQEFLKQIKDAKVNYEVIKWKPKGHAEMLEDVLHLGNTLKAAEIAGSRFYYLFNDIVWLDFSLLLFAIDYITQQGYTLVLPPYMLRGEVIQSVIDLDTFKDAIYKIENEDLYLIATAEHPIAAMFFKEEIEKDKLPLKFAGISPAFRKEASAANKDLKGIFRVHQFHKVEQFIFSTPEDSWKYHSELITNAESIFQQLELPYRIVNIASGDLGACAAKKFDLEVWMPAQAKFREMVSCSNCTDWQAFRMKIRYVDRKNNRRGYVHTLNSTAIASTRTITAILENYQREDGVVEVPKVLRKYLEAFPKAPKDYIYPLKNKII.

252-254 (TAE) contacts L-serine. ATP is bound by residues 283 to 285 (RKE) and V299. E306 is an L-serine binding site. ATP is bound at residue 370–373 (EMVS). T406 serves as a coordination point for L-serine.

This sequence belongs to the class-II aminoacyl-tRNA synthetase family. Type-1 seryl-tRNA synthetase subfamily. In terms of assembly, homodimer. The tRNA molecule binds across the dimer.

Its subcellular location is the cytoplasm. The catalysed reaction is tRNA(Ser) + L-serine + ATP = L-seryl-tRNA(Ser) + AMP + diphosphate + H(+). It carries out the reaction tRNA(Sec) + L-serine + ATP = L-seryl-tRNA(Sec) + AMP + diphosphate + H(+). Its pathway is aminoacyl-tRNA biosynthesis; selenocysteinyl-tRNA(Sec) biosynthesis; L-seryl-tRNA(Sec) from L-serine and tRNA(Sec): step 1/1. Catalyzes the attachment of serine to tRNA(Ser). Is also able to aminoacylate tRNA(Sec) with serine, to form the misacylated tRNA L-seryl-tRNA(Sec), which will be further converted into selenocysteinyl-tRNA(Sec). The protein is Serine--tRNA ligase of Saccharolobus solfataricus (strain ATCC 35092 / DSM 1617 / JCM 11322 / P2) (Sulfolobus solfataricus).